Here is a 241-residue protein sequence, read N- to C-terminus: Glycerol-3-phosphate acyltransferase (241 aa).

A run of 6 helical transmembrane segments spans residues 3–23 (ILYS…LLGS), 63–83 (IVFA…SAIV), 97–117 (YISP…PAYY), 131–151 (LIIS…LLVV), 156–176 (IVSL…WMPW), and 198–218 (LVNY…LVLV).

This sequence belongs to the PlsY family. As to quaternary structure, probably interacts with PlsX.

Its subcellular location is the cell membrane. The catalysed reaction is an acyl phosphate + sn-glycerol 3-phosphate = a 1-acyl-sn-glycero-3-phosphate + phosphate. Its pathway is lipid metabolism; phospholipid metabolism. Functionally, catalyzes the transfer of an acyl group from acyl-phosphate (acyl-PO(4)) to glycerol-3-phosphate (G3P) to form lysophosphatidic acid (LPA). This enzyme utilizes acyl-phosphate as fatty acyl donor, but not acyl-CoA or acyl-ACP. This Mycoplasmopsis agalactiae (strain NCTC 10123 / CIP 59.7 / PG2) (Mycoplasma agalactiae) protein is Glycerol-3-phosphate acyltransferase.